A 232-amino-acid polypeptide reads, in one-letter code: Large ribosomal subunit protein uL1 (232 aa).

It belongs to the universal ribosomal protein uL1 family. In terms of assembly, part of the 50S ribosomal subunit.

Its function is as follows. Binds directly to 23S rRNA. The L1 stalk is quite mobile in the ribosome, and is involved in E site tRNA release. Protein L1 is also a translational repressor protein, it controls the translation of the L11 operon by binding to its mRNA. The polypeptide is Large ribosomal subunit protein uL1 (Francisella tularensis subsp. holarctica (strain LVS)).